The sequence spans 265 residues: Tryptophan synthase alpha chain (265 aa).

Catalysis depends on proton acceptor residues glutamate 49 and aspartate 60.

This sequence belongs to the TrpA family. As to quaternary structure, tetramer of two alpha and two beta chains.

It carries out the reaction (1S,2R)-1-C-(indol-3-yl)glycerol 3-phosphate + L-serine = D-glyceraldehyde 3-phosphate + L-tryptophan + H2O. It functions in the pathway amino-acid biosynthesis; L-tryptophan biosynthesis; L-tryptophan from chorismate: step 5/5. The alpha subunit is responsible for the aldol cleavage of indoleglycerol phosphate to indole and glyceraldehyde 3-phosphate. This chain is Tryptophan synthase alpha chain, found in Polynucleobacter necessarius subsp. necessarius (strain STIR1).